Consider the following 139-residue polypeptide: Putative pre-16S rRNA nuclease (139 aa).

It belongs to the YqgF nuclease family.

Its subcellular location is the cytoplasm. Functionally, could be a nuclease involved in processing of the 5'-end of pre-16S rRNA. The polypeptide is Putative pre-16S rRNA nuclease (Haemophilus influenzae (strain 86-028NP)).